Reading from the N-terminus, the 850-residue chain is Pro-neuregulin-2, membrane-bound isoform (850 aa).

Residues 1-96 (MRQVCCSALP…AAAAGGMRRD (96 aa)) form a disordered region. Residues 1 to 111 (MRQVCCSALP…SMLLFGVSLA (111 aa)) constitute a propeptide that is removed on maturation. Over residues 20-59 (SSYSDSSSSSSERSSSSSSSSSESGSSSRSSSNNSSISRP) the composition is skewed to low complexity. N-linked (GlcNAc...) asparagine glycosylation is found at asparagine 52 and asparagine 53. Over residues 60-74 (AAPPEPRPQQQPQPR) the composition is skewed to pro residues. A compositionally biased stretch (low complexity) spans 75–92 (SPAARRAAARSRAAAAGG). Residues 112–405 (CYSPSLKSVQ…QKAEELYQKR (294 aa)) are Extracellular-facing. Residues asparagine 147, asparagine 278, and asparagine 346 are each glycosylated (N-linked (GlcNAc...) asparagine). The Ig-like C2-type domain occupies 237-332 (PKLKKMKSQT…RGRLYVNSVS (96 aa)). 4 cysteine pairs are disulfide-bonded: cysteine 257–cysteine 311, cysteine 345–cysteine 359, cysteine 353–cysteine 370, and cysteine 372–cysteine 381. An EGF-like domain is found at 341 to 382 (HARKCNETAKSYCVNGGVCYYIEGINQLSCKCPNGFFGQRCL). A helical transmembrane segment spans residues 406–426 (VLTITGICVALLVVGIVCVVA). The Cytoplasmic portion of the chain corresponds to 427-850 (YCKTKKQRKQ…PRAKQDSAPL (424 aa)). Disordered stretches follow at residues 492–535 (TFSG…DSQS), 566–585 (EERRRATAPPYHDSVDSLRD), 647–681 (LLRHPAPPGPGPGPGPGPGPGADMQRSYDSYYYPA), 700–788 (LPAS…DGAL), and 801–850 (AHDA…SAPL). Residues 494-506 (SGSHSCSPSHHCS) are compositionally biased toward low complexity. Basic and acidic residues predominate over residues 514 to 527 (HRHESHTWSLERSE). Residues 651–665 (PAPPGPGPGPGPGPG) are compositionally biased toward pro residues. Positions 750–767 (GLAAQRARAARDSLSLSS) are enriched in low complexity.

This sequence belongs to the neuregulin family. As to quaternary structure, interacts with ERBB3 and ERBB4. Proteolytic cleavage close to the plasma membrane on the external face leads to the release of the soluble growth factor form. In terms of processing, extensive glycosylation precedes the proteolytic cleavage. In terms of tissue distribution, restricted to the cerebellum in the adult.

Its subcellular location is the cell membrane. It is found in the secreted. Direct ligand for ERBB3 and ERBB4 tyrosine kinase receptors. Concomitantly recruits ERBB1 and ERBB2 coreceptors, resulting in ligand-stimulated tyrosine phosphorylation and activation of the ERBB receptors. May also promote the heterodimerization with the EGF receptor. The polypeptide is Pro-neuregulin-2, membrane-bound isoform (NRG2) (Homo sapiens (Human)).